The following is a 103-amino-acid chain: NADH-quinone oxidoreductase subunit K (103 aa).

3 helical membrane passes run methionine 1–valine 21, isoleucine 29–glycine 49, and alanine 62–valine 82. Residues glycine 84–serine 103 are disordered. Residues glycine 88 to serine 103 show a composition bias toward basic and acidic residues.

Belongs to the complex I subunit 4L family. As to quaternary structure, NDH-1 is composed of 14 different subunits. Subunits NuoA, H, J, K, L, M, N constitute the membrane sector of the complex.

The protein localises to the cell inner membrane. It carries out the reaction a quinone + NADH + 5 H(+)(in) = a quinol + NAD(+) + 4 H(+)(out). NDH-1 shuttles electrons from NADH, via FMN and iron-sulfur (Fe-S) centers, to quinones in the respiratory chain. The immediate electron acceptor for the enzyme in this species is believed to be ubiquinone. Couples the redox reaction to proton translocation (for every two electrons transferred, four hydrogen ions are translocated across the cytoplasmic membrane), and thus conserves the redox energy in a proton gradient. The sequence is that of NADH-quinone oxidoreductase subunit K from Solidesulfovibrio magneticus (strain ATCC 700980 / DSM 13731 / RS-1) (Desulfovibrio magneticus).